Consider the following 544-residue polypeptide: Lysophosphatidylcholine acyltransferase 2 (544 aa).

Residues 1-57 (MSRCAQAAEVAATVPGAGVGNVGLRPPMVPRQASFFPPPVPNPFVQQTQIGSARRVQ) are Cytoplasmic-facing. Residues 58 to 78 (IVLLGIILLPIRVLLVALILL) traverse the membrane as a helical; Signal-anchor for type II membrane protein segment. Topologically, residues 79-544 (LAWPFAAIST…EESTSDKKDD (466 aa)) are lumenal. The HXXXXD motif motif lies at 146 to 151 (HSTFFD). The short motif at 220-223 (EGTC) is the EGTC motif element. EF-hand domains are found at residues 391-426 (PVSD…LCNP) and 428-463 (NTEE…SLGV). The Ca(2+) site is built by Asp404, Asn406, Asp408, Ser410, Glu415, Asp441, Asp443, Asp445, Tyr447, and Glu452. Over residues 518-529 (VQTTPSTASNKV) the composition is skewed to polar residues. The interval 518-544 (VQTTPSTASNKVSPEKHEESTSDKKDD) is disordered. The span at 530–544 (SPEKHEESTSDKKDD) shows a compositional bias: basic and acidic residues.

The protein belongs to the 1-acyl-sn-glycerol-3-phosphate acyltransferase family.

The protein localises to the endoplasmic reticulum membrane. The protein resides in the golgi apparatus membrane. It is found in the cell membrane. Its subcellular location is the lipid droplet. The catalysed reaction is a 1-acyl-sn-glycero-3-phosphocholine + an acyl-CoA = a 1,2-diacyl-sn-glycero-3-phosphocholine + CoA. It carries out the reaction a 1-O-alkyl-sn-glycero-3-phosphocholine + acetyl-CoA = a 1-O-alkyl-2-acetyl-sn-glycero-3-phosphocholine + CoA. It catalyses the reaction a 1-acyl-sn-glycero-3-phosphate + an acyl-CoA = a 1,2-diacyl-sn-glycero-3-phosphate + CoA. The enzyme catalyses a 1-O-(1Z-alkenyl)-sn-glycero-3-phosphocholine + an acyl-CoA = a 1-O-(1Z-alkenyl)-2-acyl-sn-glycero-3-phosphocholine + CoA. The catalysed reaction is 1-hexadecanoyl-sn-glycero-3-phosphate + (9Z)-octadecenoyl-CoA = 1-hexadecanoyl-2-(9Z-octadecenoyl)-sn-glycero-3-phosphate + CoA. It carries out the reaction 1-(9Z-octadecenoyl)-sn-glycero-3-phosphate + (9Z)-octadecenoyl-CoA = 1,2-di-(9Z-octadecenoyl)-sn-glycero-3-phosphate + CoA. It catalyses the reaction 1-(9Z-octadecenoyl)-sn-glycero-3-phosphate + hexadecanoyl-CoA = 1-(9Z)-octadecenoyl-2-hexadecanoyl-sn-glycero-3-phosphate + CoA. The enzyme catalyses 1-heptadecanoyl-sn-glycero-3-phosphate + (9Z)-octadecenoyl-CoA = 1-heptadecanoyl-2-(9Z)-octadecenoyl-sn-glycero-3-phosphate + CoA. The catalysed reaction is 1-octadecanoyl-sn-glycero-3-phosphate + (9Z)-octadecenoyl-CoA = 1-octadecanoyl-2-(9Z-octadecenoyl)-sn-glycero-3-phosphate + CoA. It carries out the reaction heptadecanoyl-CoA + 1-(9Z-octadecenoyl)-sn-glycero-3-phosphate = 1-(9Z)-octadecenoyl-2-heptadecanoyl-sn-glycero-3-phosphate + CoA. It catalyses the reaction 1-(9Z-octadecenoyl)-sn-glycero-3-phosphate + (9Z,12Z)-octadecadienoyl-CoA = 1-(9Z)-octadecenoyl-2-(9Z,12Z)-octadecadienoyl-sn-glycero-3-phosphate + CoA. The enzyme catalyses 1-(9Z-octadecenoyl)-sn-glycero-3-phosphate + tetradecanoyl-CoA = 1-(9Z)-octadecenoyl-2-tetradecanoyl-sn-glycero-3-phosphate + CoA. The catalysed reaction is pentadecanoyl-CoA + 1-(9Z-octadecenoyl)-sn-glycero-3-phosphate = 1-(9Z)-octadecenoyl-2-pentadecanoyl-sn-glycero-3-phosphate + CoA. It carries out the reaction nonadecanoyl-CoA + 1-(9Z-octadecenoyl)-sn-glycero-3-phosphate = 1-(9Z)-octadecenoyl-2-nonadecanoyl-sn-glycero-3-phosphate + CoA. It catalyses the reaction 1-hexadecanoyl-sn-glycero-3-phosphocholine + (9Z)-octadecenoyl-CoA = 1-hexadecanoyl-2-(9Z-octadecenoyl)-sn-glycero-3-phosphocholine + CoA. The enzyme catalyses 1-O-hexadecyl-sn-glycero-3-phosphocholine + acetyl-CoA = 1-O-hexadecyl-2-acetyl-sn-glycero-3-phosphocholine + CoA. The catalysed reaction is 1-O-octadecyl-sn-glycero-3-phosphocholine + acetyl-CoA = 1-O-octadecyl-2-acetyl-sn-glycero-3-phosphocholine + CoA. It carries out the reaction 1-hexadecanoyl-sn-glycero-3-phosphocholine + acetyl-CoA = 1-hexadecanoyl-2-acetyl-sn-glycero-3-phosphocholine + CoA. It catalyses the reaction 1-octadecanoyl-sn-glycero-3-phosphocholine + acetyl-CoA = 1-octadecanoyl-2-acetyl-sn-glycero-3-phosphocholine + CoA. The enzyme catalyses a 1-O-(1Z-alkenyl)-sn-glycero-3-phosphocholine + acetyl-CoA = 1-O-(1Z)-alkenyl-2-acetyl-sn-glycero-3-phosphocholine + CoA. The catalysed reaction is 1-O-octadecyl-sn-glycero-3-phosphocholine + (5Z,8Z,11Z,14Z)-eicosatetraenoyl-CoA = 1-O-octadecyl-2-(5Z,8Z,11Z,14Z)-eicosatetraenoyl-sn-glycero-3-phosphocholine + CoA. It participates in lipid metabolism; phospholipid metabolism. In terms of biological role, exhibits both acyltransferase and acetyltransferase activities. Catalyzes the conversion of lysophosphatidylcholine (1-acyl-sn-glycero-3-phosphocholine or LPC) into phosphatidylcholine (1,2-diacyl-sn-glycero-3-phosphocholine or PC). Catalyzes the conversion 1-acyl-sn-glycerol-3-phosphate (lysophosphatidic acid or LPA) into 1,2-diacyl-sn-glycerol-3-phosphate (phosphatidic acid or PA) by incorporating an acyl moiety at the sn-2 position of the glycerol backbone. Involved in platelet-activating factor (PAF) biosynthesis by catalyzing the conversion of the PAF precursor, 1-O-alkyl-sn-glycero-3-phosphocholine (lyso-PAF) into 1-O-alkyl-2-acetyl-sn-glycero-3-phosphocholine (PAF). Also converts lyso-PAF to 1-O-alkyl-2-acyl-sn-glycero-3-phosphocholine (PC), a major component of cell membranes and a PAF precursor. Under resting conditions, acyltransferase activity is preferred. Upon acute inflammatory stimulus, acetyltransferase activity is enhanced and PAF synthesis increases. Involved in the regulation of lipid droplet number and size. This is Lysophosphatidylcholine acyltransferase 2 (LPCAT2) from Homo sapiens (Human).